We begin with the raw amino-acid sequence, 179 residues long: Natural killer cells antigen CD94 (179 aa).

Over 1–10 (MAVSRITRWR) the chain is Cytoplasmic. A helical; Signal-anchor for type II membrane protein transmembrane segment spans residues 11–31 (LMSMFFGIKCLFLIVALGVLV). The Extracellular portion of the chain corresponds to 32–179 (KNSFTIQNIQ…NRFICKQLPT (148 aa)). Disulfide bonds link C58–C70, C61–C72, C89–C174, and C152–C166. Positions 68–175 (HQCSCYFISK…CENKNRFICK (108 aa)) constitute a C-type lectin domain. The N-linked (GlcNAc...) asparagine glycan is linked to N93.

As to quaternary structure, can form disulfide-bonded heterodimer with NKG2 family members KLRC1 and KLRC2. KLRD1-KLRC1 heterodimer interacts with peptide-bound MHC-E-B2M heterotrimeric complex. KLRD1 plays a prominent role in directly interacting with MHC-E. KLRD1-KLRC1 interacts with much higher affinity with peptide-bound MHC-E-B2M than KLRD1-KLRC2. Interacts with the adapter protein TYROBP/DAP12; this interaction is required for cell surface expression and cell activation.

Its subcellular location is the cell membrane. In terms of biological role, immune receptor involved in self-nonself discrimination. In complex with KLRC1 or KLRC2 on cytotoxic and regulatory lymphocyte subsets, recognizes non-classical major histocompatibility (MHC) class Ib molecule MHC-E loaded with self-peptides derived from the signal sequence of classical MHC class Ia and non-classical MHC class Ib molecules. Enables cytotoxic cells to monitor the expression of MHC class I molecules in healthy cells and to tolerate self. Primarily functions as a ligand binding subunit as it lacks the capacity to signal. KLRD1-KLRC1 acts as an immune inhibitory receptor. Key inhibitory receptor on natural killer (NK) cells that regulates their activation and effector functions. Dominantly counteracts T cell receptor signaling on a subset of memory/effector CD8-positive T cells as part of an antigen-driven response to avoid autoimmunity. On intraepithelial CD8-positive gamma-delta regulatory T cells triggers TGFB1 secretion, which in turn limits the cytotoxic programming of intraepithelial CD8-positive alpha-beta T cells, distinguishing harmless from pathogenic antigens. In MHC-E-rich tumor microenvironment, acts as an immune inhibitory checkpoint and may contribute to progressive loss of effector functions of NK cells and tumor-specific T cells, a state known as cell exhaustion. Upon MHC-E-peptide binding, transmits intracellular signals through KLRC1 immunoreceptor tyrosine-based inhibition motifs (ITIMs) by recruiting INPP5D/SHIP-1 and INPPL1/SHIP-2 tyrosine phosphatases to ITIMs, and ultimately opposing signals transmitted by activating receptors through dephosphorylation of proximal signaling molecules. Its function is as follows. KLRD1-KLRC2 acts as an immune activating receptor. On cytotoxic lymphocyte subsets recognizes MHC-E loaded with signal sequence-derived peptides from non-classical MHC class Ib MHC-G molecules, likely playing a role in the generation and effector functions of adaptive NK cells and in maternal-fetal tolerance during pregnancy. Regulates the effector functions of terminally differentiated cytotoxic lymphocyte subsets, and in particular may play a role in adaptive NK cell response to viral infection. Upon MHC-E-peptide binding, transmits intracellular signals via the adapter protein TYROBP/DAP12, triggering the phosphorylation of proximal signaling molecules and cell activation. The protein is Natural killer cells antigen CD94 (Klrd1) of Rattus norvegicus (Rat).